The following is a 506-amino-acid chain: Anaerobic nitric oxide reductase transcription regulator NorR (506 aa).

Position 57 is a 4-aspartylphosphate (Asp-57). The region spanning 187–416 (MIGLSPAMTQ…LEHAIHRAVV (230 aa)) is the Sigma-54 factor interaction domain. ATP is bound by residues 215–222 (GETGTGKE) and 278–287 (ADNGTLFLDE). A DNA-binding region (H-T-H motif) is located at residues 481–500 (WAASARALETDVANLHRLAK).

Its pathway is nitrogen metabolism; nitric oxide reduction. In terms of biological role, required for the expression of anaerobic nitric oxide (NO) reductase, acts as a transcriptional activator for at least the norVW operon. Activation also requires sigma-54. This Salmonella schwarzengrund (strain CVM19633) protein is Anaerobic nitric oxide reductase transcription regulator NorR.